The sequence spans 182 residues: Putative pre-16S rRNA nuclease (182 aa).

The protein belongs to the YqgF nuclease family.

The protein localises to the cytoplasm. Its function is as follows. Could be a nuclease involved in processing of the 5'-end of pre-16S rRNA. In Corynebacterium glutamicum (strain ATCC 13032 / DSM 20300 / JCM 1318 / BCRC 11384 / CCUG 27702 / LMG 3730 / NBRC 12168 / NCIMB 10025 / NRRL B-2784 / 534), this protein is Putative pre-16S rRNA nuclease.